We begin with the raw amino-acid sequence, 123 residues long: PTS-dependent dihydroxyacetone kinase, phosphotransferase subunit DhaM (123 aa).

A PTS EIIA type-4 domain is found at 2 to 123; that stretch reads TYGIVIVSHS…EQLEKMLIEK (122 aa). H10 functions as the Tele-phosphohistidine intermediate; for EIIA activity in the catalytic mechanism.

As to quaternary structure, homodimer. The dihydroxyacetone kinase complex is composed of a homodimer of DhaM, a homodimer of DhaK and the subunit DhaL.

The catalysed reaction is dihydroxyacetone + phosphoenolpyruvate = dihydroxyacetone phosphate + pyruvate. Its pathway is polyol metabolism; glycerol degradation. Its function is as follows. Component of the dihydroxyacetone kinase complex, which is responsible for the phosphoenolpyruvate (PEP)-dependent phosphorylation of dihydroxyacetone. DhaM serves as the phosphoryl donor. Is phosphorylated by phosphoenolpyruvate in an EI- and HPr-dependent reaction, and a phosphorelay system on histidine residues finally leads to phosphoryl transfer to DhaL and dihydroxyacetone. The protein is PTS-dependent dihydroxyacetone kinase, phosphotransferase subunit DhaM of Lactococcus lactis subsp. lactis (strain IL1403) (Streptococcus lactis).